The primary structure comprises 111 residues: Nucleoid-associated protein TTE0040 (111 aa).

It belongs to the YbaB/EbfC family. As to quaternary structure, homodimer.

The protein localises to the cytoplasm. Its subcellular location is the nucleoid. Binds to DNA and alters its conformation. May be involved in regulation of gene expression, nucleoid organization and DNA protection. This Caldanaerobacter subterraneus subsp. tengcongensis (strain DSM 15242 / JCM 11007 / NBRC 100824 / MB4) (Thermoanaerobacter tengcongensis) protein is Nucleoid-associated protein TTE0040.